The primary structure comprises 100 residues: NADH-quinone oxidoreductase subunit K (100 aa).

A run of 3 helical transmembrane segments spans residues 4–24 (LQHG…GLLI), 28–48 (LLFM…AFVV), and 60–80 (VMYI…LALL).

The protein belongs to the complex I subunit 4L family. In terms of assembly, NDH-1 is composed of 13 different subunits. Subunits NuoA, H, J, K, L, M, N constitute the membrane sector of the complex.

It localises to the cell inner membrane. It catalyses the reaction a quinone + NADH + 5 H(+)(in) = a quinol + NAD(+) + 4 H(+)(out). Functionally, NDH-1 shuttles electrons from NADH, via FMN and iron-sulfur (Fe-S) centers, to quinones in the respiratory chain. The immediate electron acceptor for the enzyme in this species is believed to be ubiquinone. Couples the redox reaction to proton translocation (for every two electrons transferred, four hydrogen ions are translocated across the cytoplasmic membrane), and thus conserves the redox energy in a proton gradient. The sequence is that of NADH-quinone oxidoreductase subunit K from Pectobacterium carotovorum subsp. carotovorum (strain PC1).